Reading from the N-terminus, the 275-residue chain is Dermonecrotic toxin SpeSicTox-betaIIA2v (275 aa).

Histidine 5 is an active-site residue. Mg(2+) contacts are provided by glutamate 25 and aspartate 27. Catalysis depends on histidine 41, which acts as the Nucleophile. Intrachain disulfides connect cysteine 45-cysteine 51 and cysteine 47-cysteine 190. Residue aspartate 85 coordinates Mg(2+).

The protein belongs to the arthropod phospholipase D family. Class II subfamily. It depends on Mg(2+) as a cofactor. In terms of tissue distribution, expressed by the venom gland.

Its subcellular location is the secreted. The catalysed reaction is an N-(acyl)-sphingosylphosphocholine = an N-(acyl)-sphingosyl-1,3-cyclic phosphate + choline. It catalyses the reaction an N-(acyl)-sphingosylphosphoethanolamine = an N-(acyl)-sphingosyl-1,3-cyclic phosphate + ethanolamine. It carries out the reaction a 1-acyl-sn-glycero-3-phosphocholine = a 1-acyl-sn-glycero-2,3-cyclic phosphate + choline. The enzyme catalyses a 1-acyl-sn-glycero-3-phosphoethanolamine = a 1-acyl-sn-glycero-2,3-cyclic phosphate + ethanolamine. In terms of biological role, dermonecrotic toxins cleave the phosphodiester linkage between the phosphate and headgroup of certain phospholipids (sphingolipid and lysolipid substrates), forming an alcohol (often choline) and a cyclic phosphate. This toxin acts on sphingomyelin (SM). It may also act on ceramide phosphoethanolamine (CPE), lysophosphatidylcholine (LPC) and lysophosphatidylethanolamine (LPE), but not on lysophosphatidylserine (LPS), and lysophosphatidylglycerol (LPG). It acts by transphosphatidylation, releasing exclusively cyclic phosphate products as second products. Induces dermonecrosis, hemolysis, increased vascular permeability, edema, inflammatory response, and platelet aggregation. The polypeptide is Dermonecrotic toxin SpeSicTox-betaIIA2v (Sicarius peruensis (Six-eyed sand spider)).